A 130-amino-acid chain; its full sequence is Small ribosomal subunit protein uS9 (130 aa).

Belongs to the universal ribosomal protein uS9 family.

This is Small ribosomal subunit protein uS9 from Pseudomonas putida (strain ATCC 700007 / DSM 6899 / JCM 31910 / BCRC 17059 / LMG 24140 / F1).